Here is a 509-residue protein sequence, read N- to C-terminus: Bifunctional purine biosynthesis protein PurH (509 aa).

Residues 1-144 (MKRALISVSD…KNYAAVTVVV (144 aa)) form the MGS-like domain.

It belongs to the PurH family.

It carries out the reaction (6R)-10-formyltetrahydrofolate + 5-amino-1-(5-phospho-beta-D-ribosyl)imidazole-4-carboxamide = 5-formamido-1-(5-phospho-D-ribosyl)imidazole-4-carboxamide + (6S)-5,6,7,8-tetrahydrofolate. The enzyme catalyses IMP + H2O = 5-formamido-1-(5-phospho-D-ribosyl)imidazole-4-carboxamide. It functions in the pathway purine metabolism; IMP biosynthesis via de novo pathway; 5-formamido-1-(5-phospho-D-ribosyl)imidazole-4-carboxamide from 5-amino-1-(5-phospho-D-ribosyl)imidazole-4-carboxamide (10-formyl THF route): step 1/1. It participates in purine metabolism; IMP biosynthesis via de novo pathway; IMP from 5-formamido-1-(5-phospho-D-ribosyl)imidazole-4-carboxamide: step 1/1. The polypeptide is Bifunctional purine biosynthesis protein PurH (Listeria monocytogenes serotype 4b (strain CLIP80459)).